The primary structure comprises 501 residues: Chromosomal replication initiator protein DnaA (501 aa).

The tract at residues 1–90 (MSVELWQQCV…KRSSAPRAAP (90 aa)) is domain I, interacts with DnaA modulators. A domain II region spans residues 91–164 (NAPLAAAASQ…QVEGALKHTS (74 aa)). Over residues 103 to 121 (AAPVASTPAPAPSKSSAKK) the composition is skewed to low complexity. The segment at 103 to 150 (AAPVASTPAPAPSKSSAKKNAAENEEPSRDSFDPMAGASSQQAPIRAE) is disordered. The segment covering 122 to 134 (NAAENEEPSRDSF) has biased composition (basic and acidic residues). The segment at 165 to 381 (YLNRTFTFEN…GALKRVIAHS (217 aa)) is domain III, AAA+ region. The ATP site is built by Gly-209, Gly-211, Lys-212, and Thr-213. A domain IV, binds dsDNA region spans residues 382–501 (HFMGRDITIE…YKNLLRTLTT (120 aa)).

Belongs to the DnaA family. As to quaternary structure, oligomerizes as a right-handed, spiral filament on DNA at oriC.

It localises to the cytoplasm. In terms of biological role, plays an essential role in the initiation and regulation of chromosomal replication. ATP-DnaA binds to the origin of replication (oriC) to initiate formation of the DNA replication initiation complex once per cell cycle. Binds the DnaA box (a 9 base pair repeat at the origin) and separates the double-stranded (ds)DNA. Forms a right-handed helical filament on oriC DNA; dsDNA binds to the exterior of the filament while single-stranded (ss)DNA is stabiized in the filament's interior. The ATP-DnaA-oriC complex binds and stabilizes one strand of the AT-rich DNA unwinding element (DUE), permitting loading of DNA polymerase. After initiation quickly degrades to an ADP-DnaA complex that is not apt for DNA replication. Binds acidic phospholipids. The sequence is that of Chromosomal replication initiator protein DnaA from Pseudomonas fluorescens (strain SBW25).